The chain runs to 349 residues: Protein RAE1 (349 aa).

Residues 1-21 are disordered; the sequence is MATFGAPATANSNPNKSYEVT. Residue Ala-2 is modified to N-acetylalanine. Positions 9–21 are enriched in polar residues; it reads TANSNPNKSYEVT. WD repeat units follow at residues 23 to 62, 70 to 109, 112 to 151, 153 to 190, and 244 to 283; these read SPAD…ASLA, SHDQ…QPVT, MHEG…PVHT, QLPD…TEFK, and NDIY…RLKA. The DWD box signature appears at 128 to 144; that stretch reads LLATGSWDKTLKYWDTR.

The protein belongs to the WD repeat rae1 family. As to quaternary structure, part of the nuclear pore complex (NPC). The NPC has an eight-fold symmetrical structure comprising a central transport channel and two rings, the cytoplasmic and nuclear rings, to which eight filaments are attached. The cytoplasmic filaments have loose ends, while the nuclear filaments are joined in a distal ring, forming a nuclear basket. NPCs are highly dynamic in configuration and composition, and can be devided in 3 subcomplexes, the NUP62 subcomplex, the NUP107-160 subcomplex and the NUP93 subcomplex, containing approximately 30 different nucleoporin proteins. Interacts with DDB1A.

The protein resides in the nucleus envelope. It localises to the nucleus. Its subcellular location is the nuclear pore complex. This Arabidopsis thaliana (Mouse-ear cress) protein is Protein RAE1.